We begin with the raw amino-acid sequence, 69 residues long: Large ribosomal subunit protein bL31 (69 aa).

4 residues coordinate Zn(2+): C17, C19, C37, and C40.

This sequence belongs to the bacterial ribosomal protein bL31 family. Type A subfamily. In terms of assembly, part of the 50S ribosomal subunit. Zn(2+) is required as a cofactor.

Its function is as follows. Binds the 23S rRNA. In Clostridium botulinum (strain Eklund 17B / Type B), this protein is Large ribosomal subunit protein bL31.